The chain runs to 118 residues: Large ribosomal subunit protein bL19 (118 aa).

The protein belongs to the bacterial ribosomal protein bL19 family.

In terms of biological role, this protein is located at the 30S-50S ribosomal subunit interface and may play a role in the structure and function of the aminoacyl-tRNA binding site. This chain is Large ribosomal subunit protein bL19, found in Campylobacter hominis (strain ATCC BAA-381 / DSM 21671 / CCUG 45161 / LMG 19568 / NCTC 13146 / CH001A).